The chain runs to 354 residues: Ubiquitin-conjugating enzyme E2 Z (354 aa).

The interval 1 to 21 is disordered; that stretch reads MAESPTEEAATAGAGAAGPGA. The 155-residue stretch at 99-253 folds into the UBC core domain; sequence QCLLRIKRDI…IRHETIRVAV (155 aa). The active-site Glycyl thioester intermediate is Cys188. The tract at residues 332–354 is disordered; that stretch reads NAEMDSDSSSSGTETDLHGSLRV. Position 337 is a phosphoserine (Ser337).

Belongs to the ubiquitin-conjugating enzyme family. In terms of tissue distribution, widely expressed. Highly in placenta, pancreas, spleen and testis.

The protein localises to the cytoplasm. It is found in the nucleus. It catalyses the reaction S-ubiquitinyl-[E1 ubiquitin-activating enzyme]-L-cysteine + [E2 ubiquitin-conjugating enzyme]-L-cysteine = [E1 ubiquitin-activating enzyme]-L-cysteine + S-ubiquitinyl-[E2 ubiquitin-conjugating enzyme]-L-cysteine.. It participates in protein modification; protein ubiquitination. Catalyzes the covalent attachment of ubiquitin to other proteins. Specific substrate for UBA6, not charged with ubiquitin by UBE1. May be involved in apoptosis regulation. The chain is Ubiquitin-conjugating enzyme E2 Z (UBE2Z) from Homo sapiens (Human).